We begin with the raw amino-acid sequence, 900 residues long: Translation initiation factor IF-2 (900 aa).

3 stretches are compositionally biased toward basic and acidic residues: residues 119–158, 165–191, and 198–229; these read AAKA…EKQE, ADEK…KADA, and EEAR…DHHV. Positions 119–306 are disordered; that stretch reads AAKAEAEAKA…NARSVAPESM (188 aa). A compositionally biased stretch (low complexity) spans 257 to 272; that stretch reads SANAGNNANSNSNAGS. Residues 400–569 enclose the tr-type G domain; that stretch reads PRAPVVTIMG…LLESEVLELK (170 aa). Positions 409–416 are G1; that stretch reads GHVDHGKT. A GTP-binding site is contributed by 409 to 416; the sequence is GHVDHGKT. The interval 434-438 is G2; sequence GITQH. The G3 stretch occupies residues 455–458; sequence DTPG. Residues 455–459 and 509–512 contribute to the GTP site; these read DTPGH and NKID. The tract at residues 509–512 is G4; sequence NKID. Residues 545-547 are G5; it reads SAK.

This sequence belongs to the TRAFAC class translation factor GTPase superfamily. Classic translation factor GTPase family. IF-2 subfamily.

The protein localises to the cytoplasm. One of the essential components for the initiation of protein synthesis. Protects formylmethionyl-tRNA from spontaneous hydrolysis and promotes its binding to the 30S ribosomal subunits. Also involved in the hydrolysis of GTP during the formation of the 70S ribosomal complex. This is Translation initiation factor IF-2 from Shewanella piezotolerans (strain WP3 / JCM 13877).